The primary structure comprises 176 residues: MLRSSQARSVVRSSQWATTARVHQLELPSGWKPSALGVAPWQQRQQRQLSVRSLDHLVITCHDMDKTIDFYTRLGMSVVQFGQGRKALEFGSQKINLHQKGKEFEPKALVPQPGSQDLCFVIHDSIADAQKHLQEHGIQVVEGPVKRTGAVGPILSIYVRDPDNNLIELSSYQDAK.

The 120-residue stretch at 53 to 172 (SLDHLVITCH…DNNLIELSSY (120 aa)) folds into the VOC domain. Catalysis depends on glutamate 168, which acts as the Proton donor/acceptor.

The protein belongs to the glyoxalase I family.

The protein operates within secondary metabolite biosynthesis. Its function is as follows. Glyoxalase domain-containing protein; part of the gene cluster that mediates the biosynthesis of itaconic acid and 2-hydroxyparaconate. Cis-aconitate is secreted by the mitochondrial tricarboxylate transporter MTT1. In the cytosol cis-aconitate is converted into trans-aconitate via isomerization by the aconitate-delta-isomerase ADI1. Decarboxylation of trans-aconitate by the trans-aconitate decarboxylase TAD1 then leads then to the production of itaconic acid. The cytochrome P450 monooxygenase CYP3 further converts itaconate to 2-hydroxyparaconate via oxidation of the double bond, leading to a transient epoxide, which can subsequently be lactonized to produce 2-hydroxyparaconate. Secretion of itaconate and possibly 2-hydroxyparaconate into the medium is mediated by the major facilitator ITP1. The glyoxalase domain-containing protein RDO1 is not involved in the biosynthesis of itaconate and 2-hydroxyparaconate, however, it might play a role in the further conversion of 2-hydroxyparaconate to itatartarate. In Mycosarcoma maydis (Corn smut fungus), this protein is Glyoxalase domain-containing protein RDO1.